A 349-amino-acid chain; its full sequence is N-formyl peptide receptor 3 (349 aa).

The Extracellular segment spans residues 1–27; the sequence is METNFSIPLNESEEVLPEPAGHTVLWI. Asparagine 4 and asparagine 10 each carry an N-linked (GlcNAc...) asparagine glycan. Residues 28–50 form a helical membrane-spanning segment; it reads FSLLVHGVTFIFGVLGNGLVIWV. Topologically, residues 51-61 are cytoplasmic; sequence AGFRMTRTVNT. Residues 62 to 83 traverse the membrane as a helical segment; the sequence is ICYLNLALADFSFSAILPFRMV. At 84 to 100 the chain is on the extracellular side; sequence SVAMREKWPFGTFLCKL. A disulfide bridge connects residues cysteine 98 and cysteine 176. The helical transmembrane segment at 101–121 threads the bilayer; the sequence is VHVMIDINLFVSVYLITIIAL. The Cytoplasmic segment spans residues 122–140; the sequence is DRCICVLHPAWAQNHRTMS. A helical membrane pass occupies residues 141 to 162; it reads LAKRVMMGLWILAIVLTLPNFI. Residues 163–205 are Extracellular-facing; sequence FWTTISTKNGDTYCIFNFPFWGDTAVERLNAFITMGKVFLILH. The helical transmembrane segment at 206–226 threads the bilayer; it reads FIIGFSMPMSIITVCYGIIAA. At 227–242 the chain is on the cytoplasmic side; it reads KIHRNHMIKSSSPLRV. The chain crosses the membrane as a helical span at residues 243–266; that stretch reads FAAVVASFFICWFPYELIGILMAV. Residues 267-286 are Extracellular-facing; sequence WLKEMLLNGKYKIILVLLNP. A helical transmembrane segment spans residues 287–306; sequence TSSLAFFNSCLNPILYVFLG. Over 307–349 the chain is Cytoplasmic; the sequence is SNFQERLIRSLPTSLERALTEVPDSAQTSNTHTNSASPPEETE. The disordered stretch occupies residues 328-349; the sequence is VPDSAQTSNTHTNSASPPEETE. Over residues 331–343 the composition is skewed to polar residues; sequence SAQTSNTHTNSAS.

The protein belongs to the G-protein coupled receptor 1 family.

Its subcellular location is the cell membrane. Its function is as follows. Low affinity receptor for N-formyl-methionyl peptides, which are powerful neutrophils chemotactic factors. Binding of FMLP to the receptor causes activation of neutrophils. This response is mediated via a G-protein that activates a phosphatidylinositol-calcium second messenger system. This is N-formyl peptide receptor 3 (FPR3) from Pongo pygmaeus (Bornean orangutan).